A 203-amino-acid chain; its full sequence is Protein ILM1 (203 aa).

Residues 1–3 lie on the Cytoplasmic side of the membrane; that stretch reads MAQ. A helical transmembrane segment spans residues 4–24; it reads ALNSTNIAFFRVAFLFTIAFF. Residues 25–58 are Lumenal-facing; sequence CLKNVNSILQNTYFIVLTQAMNLPQLTLSRYSGQ. A helical transmembrane segment spans residues 59–79; sequence LGLFALLFTLNGVHDLIPLLE. The Cytoplasmic segment spans residues 80–92; the sequence is NNVKYFQSVVPVR. The helical transmembrane segment at 93–113 threads the bilayer; it reads LLIFFILTSISYLWESNFYVH. Residue Asn114 is a topological domain, lumenal. The chain crosses the membrane as a helical span at residues 115-135; the sequence is NSVFIYCFAEVWINFLLYNAI. Topologically, residues 136–203 are cytoplasmic; it reads REEKNEEFKR…KGNDDSDAKK (68 aa). A compositionally biased stretch (acidic residues) spans 175-187; sequence INDEENDDEDGKD. Positions 175 to 203 are disordered; that stretch reads INDEENDDEDGKDNDDNNEKGNDDSDAKK. Basic and acidic residues predominate over residues 188–203; that stretch reads NDDNNEKGNDDSDAKK.

This sequence belongs to the ILM1 family.

The protein localises to the endoplasmic reticulum membrane. The sequence is that of Protein ILM1 (ILM1) from Saccharomyces cerevisiae (strain ATCC 204508 / S288c) (Baker's yeast).